Reading from the N-terminus, the 384-residue chain is GDSL esterase/lipase ENOD8 (384 aa).

Residues 1–31 (MKFMAKIELSRHIPLVTLIVLVLCITPPIFA) form the signal peptide. Ser46 serves as the catalytic Nucleophile. N-linked (GlcNAc...) asparagine glycosylation is found at Asn105, Asn191, Asn198, Asn276, and Asn330. Active-site residues include Asp349 and His352.

This sequence belongs to the 'GDSL' lipolytic enzyme family. As to expression, expressed in root nodules (at protein level).

The protein localises to the symbiosome. In terms of biological role, has lipase and esterase activities. Probably involved in root nodule physiology. In Medicago truncatula (Barrel medic), this protein is GDSL esterase/lipase ENOD8.